The following is a 304-amino-acid chain: Non-specific ribonucleoside hydrolase RihC (304 aa).

Residue histidine 233 is part of the active site.

This sequence belongs to the IUNH family. RihC subfamily.

Hydrolyzes both purine and pyrimidine ribonucleosides with a broad-substrate specificity. The sequence is that of Non-specific ribonucleoside hydrolase RihC from Escherichia coli (strain SE11).